Here is a 264-residue protein sequence, read N- to C-terminus: Stage IV sporulation protein FA (264 aa).

Positions 1 to 10 are enriched in basic and acidic residues; the sequence is MSHRADEIRK. The segment at 1-37 is disordered; it reads MSHRADEIRKRLEKRRKQLSGSKRFSTQTVSEKQKPP. Topologically, residues 1–72 are mother cell cytoplasmic; sequence MSHRADEIRK…GKHPLVKTDS (72 aa). Positions 19–31 are enriched in polar residues; that stretch reads LSGSKRFSTQTVS. A helical transmembrane segment spans residues 73 to 90; sequence IILKCLLSACLVLVSAIA. The Forespore intermembrane space segment spans residues 91–264; that stretch reads YKTNIGPVSQ…IDPIQVISFE (174 aa).

As to quaternary structure, forms a complex with BofA and SpoIVFB localized in the mother-cell membrane surrounding the forespore. Post-translationally, may be degraded by FtsH. It is stabilized by an ftsH disruption mutant, and in a probably independent fashion, by overexpression of BofA.

It localises to the forespore outer membrane. In terms of biological role, implicated in the coupling of mother cell to forespore gene expression. Required for spore formation at 37 degrees Celsius, but not at 30 degrees Celsius. SpoIVFA plays a central role in both maintaining the SpoIVFA/BofA/SpoIVFB complex and anchoring it to the outer forespore membrane. SpoIVFA brings BofA into close proximity to SpoIVFB, allowing BofA to inhibit SpoIVFB. Increased accumulation of SpoIVFA seems to inhibit the activity of SpoIVFB and thus regulates the activation of sigma-K. In Bacillus subtilis (strain 168), this protein is Stage IV sporulation protein FA (spoIVFA).